We begin with the raw amino-acid sequence, 1262 residues long: Isoleucine--tRNA ligase, cytoplasmic (1262 aa).

Met1 carries the post-translational modification N-acetylmethionine. Positions 48-58 (PFATGLPHYGH) match the 'HIGH' region motif. A 'KMSKS' region motif is present at residues 600-604 (KMSKR). Lys603 serves as a coordination point for ATP. 2 positions are modified to phosphoserine: Ser1047 and Ser1049. Thr1058 is subject to Phosphothreonine.

Belongs to the class-I aminoacyl-tRNA synthetase family. In terms of assembly, part of a multisubunit complex that groups tRNA ligases for Arg (RARS1), Asp (DARS1), Gln (QARS1), Ile (IARS1), Leu (LARS1), Lys (KARS1), Met (MARS1) the bifunctional ligase for Glu and Pro (EPRS1) and the auxiliary subunits AIMP1/p43, AIMP2/p38 and EEF1E1/p18. In terms of tissue distribution, expressed in liver and muscle (at protein level).

It localises to the cytoplasm. It is found in the cytosol. It carries out the reaction tRNA(Ile) + L-isoleucine + ATP = L-isoleucyl-tRNA(Ile) + AMP + diphosphate. Catalyzes the specific attachment of an amino acid to its cognate tRNA in a 2 step reaction: the amino acid (AA) is first activated by ATP to form AA-AMP and then transferred to the acceptor end of the tRNA. This is Isoleucine--tRNA ligase, cytoplasmic from Homo sapiens (Human).